A 1347-amino-acid chain; its full sequence is MENLPFPLKLLSASSLNAPSSTPWVLDIFLTLVFALGFFFLLLPYLSYFRCDDPPSPSPGKRKCPVGRRRRPRGRMKNHSLRAGRECPRGLEETSDLLSQLQSLLGPHLDKGDFGQLSGPDPPGEVGERAPDGASQSSHEPMEDAAPILSPLASPDPQAKHPQDLASTPSPGPMTTSVSSLSASQPPEPSLPLEHPSPEPPALFPHPPHTPDPLACSLPPPKGFTAPPLRDSTLITPSHCDSVAFPLGTVPQSLSPHEDLVASVPAISGLGGSNSHVSASSRWQETARTSCAFNSSVQQDHLSRHPPETCQMEAGSLFLLSSDGQNVVGIQVTETAKVNIWEEKENVGSFTNRMTPEKHLNYLRNLAKSLDAEQDTTNPKPFWNMGENSKQLPGPQKLSDPRLWQESFWKNYSQLFWGLPSLHSESLVANAWVTDRSYTLQSPPFLFNEMSNVCPIQRETTMSPLLFQAQPLSHLGPECQPFISSTPQFRPTPMAQAEAQAHLQSSFPVLSPAFPSLIQNTGVACPASQNKVQALSLPETQHPEWPLLRRQLEGRLALPSRVQKSQDVFSVSTPNLPQESLTSILPENFPVSPELRRQLEQHIKKWIIQHWGNLGRIQESLDLMQLRDESPGTSQAKGKPSPWQSSMSTGESSKEAQKVKFQLERDPCPHLGQILGETPQNLSRDMKSFPRKVLGVTSEELERNLRKPLRSDSGSDLLRCTERTHIENILKAHMGRNLGQTNEGLIPVCVRRSWLAVNQALPVSNTHVKTSNLAAPKSGKACVNTAQVLSFLEPCTQQGLGAHIVRFWAKHRWGLPLRVLKPIQCFKLEKVSSLSLTQLAGPSSATCESGAGSEVEVDMFLRKPPMASLRKQVLTKASDHMPESLLASSPAWKQFQRAPRGIPSWNDHEPLKPPPAGQEGRWPSKPLTYSLTGSIQQSRSLGAQSSKAGETREAVPQCRVPLETCMLANLQATSEDVHGFEAPGTSKSSLHPRVSVSQDPRKLCLMEEVVNEFEPGMATKSETQPQVCAAVVLLPDGQASVVPHASENLVSQVPQGHLQSMPTGNMRASQELHDLMAARRSKLVHEEPRNPNCQGSCKSQRPMFPPIHKSEKSRKPNLEKHEERLEGLRTPQLTPVRKTEDTHQDEGVQLLPSKKQPPSVSPFGENIKQIFQWIFSKKKSKPAPVTAESQKTVKNRSRVYSSSAEAQGLMTAVGQMLDEKMSLCHARHASKVNQHKQKFQAPVCGFPCNHRHLFYSEHGRILSYAASSQQATLKSQGCPNRDRQIRNQQPLKSVRCNNEQWGLRHPQILHPKKAVSPVSPPQHWPKTSGASSHHHHCPRHCLLWEGI.

The chain crosses the membrane as a helical span at residues 23-43 (PWVLDIFLTLVFALGFFFLLL). 7 disordered regions span residues 55-88 (PSPSPGKRKCPVGRRRRPRGRMKNHSLRAGRECP), 106-233 (GPHL…RDST), 374-397 (QDTTNPKPFWNMGENSKQLPGPQK), 628-658 (DESPGTSQAKGKPSPWQSSMSTGESSKEAQK), 900-955 (RGIP…REAV), 1084-1161 (VHEE…PSVS), and 1313-1335 (KAVSPVSPPQHWPKTSGASSHHH). Basic residues predominate over residues 60–82 (GKRKCPVGRRRRPRGRMKNHSLR). A compositionally biased stretch (polar residues) spans 165-178 (LASTPSPGPMTTSV). The segment covering 198 to 211 (PEPPALFPHPPHTP) has biased composition (pro residues). 2 stretches are compositionally biased toward polar residues: residues 631 to 651 (PGTSQAKGKPSPWQSSMSTGE) and 927 to 948 (LTYSLTGSIQQSRSLGAQSSKA). Basic and acidic residues-rich tracts occupy residues 1108 to 1127 (HKSEKSRKPNLEKHEERLEG) and 1137 to 1146 (RKTEDTHQDE).

Belongs to the SPATA31 family.

The protein resides in the membrane. In terms of biological role, may play a role in spermatogenesis. The chain is Spermatogenesis-associated protein 31A7 from Homo sapiens (Human).